Consider the following 120-residue polypeptide: Hydrogenase maturation factor HypA (120 aa).

Position 2 (histidine 2) interacts with Ni(2+). The Zn(2+) site is built by cysteine 73, histidine 76, cysteine 89, and cysteine 92.

This sequence belongs to the HypA/HybF family.

Its function is as follows. Involved in the maturation of [NiFe] hydrogenases. Required for nickel insertion into the metal center of the hydrogenase. The chain is Hydrogenase maturation factor HypA from Deinococcus radiodurans (strain ATCC 13939 / DSM 20539 / JCM 16871 / CCUG 27074 / LMG 4051 / NBRC 15346 / NCIMB 9279 / VKM B-1422 / R1).